The chain runs to 345 residues: Anthranilate phosphoribosyltransferase (345 aa).

Residues glycine 84, 87-88 (GD), threonine 92, 94-97 (NIST), 112-120 (KHGGRSVSS), and serine 124 each bind 5-phospho-alpha-D-ribose 1-diphosphate. Glycine 84 contacts anthranilate. Serine 96 serves as a coordination point for Mg(2+). Arginine 170 is an anthranilate binding site. Residues aspartate 229 and glutamate 230 each coordinate Mg(2+).

This sequence belongs to the anthranilate phosphoribosyltransferase family. Homodimer. Mg(2+) is required as a cofactor.

It catalyses the reaction N-(5-phospho-beta-D-ribosyl)anthranilate + diphosphate = 5-phospho-alpha-D-ribose 1-diphosphate + anthranilate. The protein operates within amino-acid biosynthesis; L-tryptophan biosynthesis; L-tryptophan from chorismate: step 2/5. Catalyzes the transfer of the phosphoribosyl group of 5-phosphorylribose-1-pyrophosphate (PRPP) to anthranilate to yield N-(5'-phosphoribosyl)-anthranilate (PRA). The polypeptide is Anthranilate phosphoribosyltransferase (Leptothrix cholodnii (strain ATCC 51168 / LMG 8142 / SP-6) (Leptothrix discophora (strain SP-6))).